Here is a 210-residue protein sequence, read N- to C-terminus: Uracil phosphoribosyltransferase (210 aa).

5-phospho-alpha-D-ribose 1-diphosphate is bound by residues Arg-78, Arg-103, and 130-138; that span reads DPMLATGGT. Uracil-binding positions include Ile-193 and 198–200; that span reads GDA. Asp-199 is a binding site for 5-phospho-alpha-D-ribose 1-diphosphate.

This sequence belongs to the UPRTase family. Mg(2+) serves as cofactor.

The catalysed reaction is UMP + diphosphate = 5-phospho-alpha-D-ribose 1-diphosphate + uracil. It participates in pyrimidine metabolism; UMP biosynthesis via salvage pathway; UMP from uracil: step 1/1. Its activity is regulated as follows. Allosterically activated by GTP. Its function is as follows. Catalyzes the conversion of uracil and 5-phospho-alpha-D-ribose 1-diphosphate (PRPP) to UMP and diphosphate. The protein is Uracil phosphoribosyltransferase of Xanthomonas euvesicatoria pv. vesicatoria (strain 85-10) (Xanthomonas campestris pv. vesicatoria).